Reading from the N-terminus, the 530-residue chain is Probable NADH-specific resorcinol 4-hydroxylase (530 aa).

It carries out the reaction resorcinol + NADH + O2 + H(+) = benzene-1,2,4-triol + NAD(+) + H2O. Single-component hydroxylase that is part of the gamma-resorcylate (GRA) degradation pathway. GRA is initially converted by GRA decarboxylase to resorcinol, which is hydroxylated by resorcinol 4-hydroxylase. This chain is Probable NADH-specific resorcinol 4-hydroxylase (tsdB), found in Rhodococcus jostii (strain RHA1).